A 514-amino-acid polypeptide reads, in one-letter code: Peptide chain release factor 3 (514 aa).

The 261-residue stretch at 8-268 (KKRRTFAIIS…TFLEFAPEPH (261 aa)) folds into the tr-type G domain. Residues 17–24 (SHPDAGKT), 85–89 (DTPGH), and 139–142 (NKLD) each bind GTP.

This sequence belongs to the TRAFAC class translation factor GTPase superfamily. Classic translation factor GTPase family. PrfC subfamily.

The protein localises to the cytoplasm. Increases the formation of ribosomal termination complexes and stimulates activities of RF-1 and RF-2. It binds guanine nucleotides and has strong preference for UGA stop codons. It may interact directly with the ribosome. The stimulation of RF-1 and RF-2 is significantly reduced by GTP and GDP, but not by GMP. The chain is Peptide chain release factor 3 from Streptococcus agalactiae serotype Ia (strain ATCC 27591 / A909 / CDC SS700).